The following is a 206-amino-acid chain: Fibroblast growth factor 4 (206 aa).

The N-terminal stretch at 1–30 (MSGPGTAAVALLPAVLLALLAPWAGRGGAA) is a signal peptide.

This sequence belongs to the heparin-binding growth factors family. In terms of assembly, interacts with FGFR1, FGFR2, FGFR3 and FGFR4. Affinity between fibroblast growth factors (FGFs) and their receptors is increased by heparan sulfate glycosaminoglycans that function as coreceptors.

It is found in the secreted. In terms of biological role, plays an important role in the regulation of embryonic development, cell proliferation, and cell differentiation. Required for normal limb and cardiac valve development during embryogenesis. May play a role in embryonic molar tooth bud development via inducing the expression of MSX1, MSX2 and MSX1-mediated expression of SDC1 in dental mesenchyme cells. The polypeptide is Fibroblast growth factor 4 (Homo sapiens (Human)).